Consider the following 692-residue polypeptide: Potassium-transporting ATPase ATP-binding subunit (692 aa).

4 helical membrane passes run 50–70 (PIMF…FLPS), 77–97 (GWFN…ANFA), 240–260 (LTLI…YLGF), and 266–286 (VLVA…LSAI). Asp-319 (4-aspartylphosphate intermediate) is an active-site residue. Residues Asp-356, Glu-360, 388-395 (FKAETRMS), and Lys-407 each bind ATP. Mg(2+) contacts are provided by Asp-530 and Asp-534. Transmembrane regions (helical) follow at residues 600 to 620 (FAII…LNIM), 628 to 648 (AILS…PLAM), and 672 to 692 (GGVI…GLFI).

The protein belongs to the cation transport ATPase (P-type) (TC 3.A.3) family. Type IA subfamily. The system is composed of three essential subunits: KdpA, KdpB and KdpC.

It localises to the cell membrane. It carries out the reaction K(+)(out) + ATP + H2O = K(+)(in) + ADP + phosphate + H(+). Its function is as follows. Part of the high-affinity ATP-driven potassium transport (or Kdp) system, which catalyzes the hydrolysis of ATP coupled with the electrogenic transport of potassium into the cytoplasm. This subunit is responsible for energy coupling to the transport system and for the release of the potassium ions to the cytoplasm. In Bacillus cereus (strain 03BB102), this protein is Potassium-transporting ATPase ATP-binding subunit.